The following is a 153-amino-acid chain: Transcriptional repressor NrdR (153 aa).

Residues 1 to 22 (MRCPACHHNGTRVLDSRPAHEG) are disordered. A zinc finger spans residues 3–34 (CPACHHNGTRVLDSRPAHEGRSIRRRRECESC). Residues 49–139 (LIVVKKDGTR…VYRQFKDINV (91 aa)) form the ATP-cone domain.

The protein belongs to the NrdR family. Zn(2+) is required as a cofactor.

Negatively regulates transcription of bacterial ribonucleotide reductase nrd genes and operons by binding to NrdR-boxes. The polypeptide is Transcriptional repressor NrdR (Halalkalibacterium halodurans (strain ATCC BAA-125 / DSM 18197 / FERM 7344 / JCM 9153 / C-125) (Bacillus halodurans)).